A 457-amino-acid polypeptide reads, in one-letter code: MNNLAAVILAAGKGTRMKSNIVKVMHPLGGLPMVSWPVNTAREAGASNIVLVTGHQSEKVQDFFEGQSDVRFAVQEEQLGTGHAVACALPALLGFSGMVLILCGDVPLISTATLKAMVKQHRSRHAVITVLTADFAQPNGYGRIVKDGDGFIKRIVEEKDATDAERRITEINSGIYCVESDFLTVAIPNLKNDNAQREYYLTDIIKEAANLGLLCQAFPVADPAEVMGINDRAQLAEAGQLLRGRINKALMLDGTTLIDPQTTYIDRGVRIGKDTTIHPNVHISGDTEIGNNCLIEPSVVIKGCKIGNGVTIKAGSVMMDAVIHDDVAIGPMAHLRPGTELKEHVKIGNFVETKKIVMGEGSKASHLTYLGDAAIGTNVNIGCGTITCNYDGVKKHRTVIGDDVFVGSDVQFVAPVTIGRNSLIAAGTTVTRDVPPDSLAIARAPQVNKEGWKLKKK.

A pyrophosphorylase region spans residues 1–232 (MNNLAAVILA…PAEVMGINDR (232 aa)). Residues 9–12 (LAAG), Lys23, Gln75, and 80–81 (GT) contribute to the UDP-N-acetyl-alpha-D-glucosamine site. Asp105 lines the Mg(2+) pocket. 4 residues coordinate UDP-N-acetyl-alpha-D-glucosamine: Gly142, Glu157, Asn172, and Asn230. Position 230 (Asn230) interacts with Mg(2+). Residues 233-253 (AQLAEAGQLLRGRINKALMLD) are linker. An N-acetyltransferase region spans residues 254-457 (GTTLIDPQTT…NKEGWKLKKK (204 aa)). 2 residues coordinate UDP-N-acetyl-alpha-D-glucosamine: Arg336 and Lys354. Catalysis depends on His366, which acts as the Proton acceptor. Residues Tyr369 and Asn380 each coordinate UDP-N-acetyl-alpha-D-glucosamine. Residues 389–390 (NY), Ser408, Ala426, and Arg443 each bind acetyl-CoA.

It in the N-terminal section; belongs to the N-acetylglucosamine-1-phosphate uridyltransferase family. In the C-terminal section; belongs to the transferase hexapeptide repeat family. Homotrimer. Mg(2+) is required as a cofactor.

It localises to the cytoplasm. The catalysed reaction is alpha-D-glucosamine 1-phosphate + acetyl-CoA = N-acetyl-alpha-D-glucosamine 1-phosphate + CoA + H(+). It carries out the reaction N-acetyl-alpha-D-glucosamine 1-phosphate + UTP + H(+) = UDP-N-acetyl-alpha-D-glucosamine + diphosphate. Its pathway is nucleotide-sugar biosynthesis; UDP-N-acetyl-alpha-D-glucosamine biosynthesis; N-acetyl-alpha-D-glucosamine 1-phosphate from alpha-D-glucosamine 6-phosphate (route II): step 2/2. The protein operates within nucleotide-sugar biosynthesis; UDP-N-acetyl-alpha-D-glucosamine biosynthesis; UDP-N-acetyl-alpha-D-glucosamine from N-acetyl-alpha-D-glucosamine 1-phosphate: step 1/1. It participates in bacterial outer membrane biogenesis; LPS lipid A biosynthesis. In terms of biological role, catalyzes the last two sequential reactions in the de novo biosynthetic pathway for UDP-N-acetylglucosamine (UDP-GlcNAc). The C-terminal domain catalyzes the transfer of acetyl group from acetyl coenzyme A to glucosamine-1-phosphate (GlcN-1-P) to produce N-acetylglucosamine-1-phosphate (GlcNAc-1-P), which is converted into UDP-GlcNAc by the transfer of uridine 5-monophosphate (from uridine 5-triphosphate), a reaction catalyzed by the N-terminal domain. This chain is Bifunctional protein GlmU, found in Geotalea uraniireducens (strain Rf4) (Geobacter uraniireducens).